Reading from the N-terminus, the 555-residue chain is Glutamine--tRNA ligase (555 aa).

The 'HIGH' region motif lies at 34–44 (PEPNGYLHIGH). Residues 35 to 37 (EPN) and 41 to 47 (HIGHAKS) each bind ATP. The L-glutamine site is built by Asp67 and Tyr212. ATP is bound by residues Thr231, 261 to 262 (RL), and 269 to 271 (MSK). Residues 268–272 (IMSKR) carry the 'KMSKS' region motif.

The protein belongs to the class-I aminoacyl-tRNA synthetase family. As to quaternary structure, monomer.

The protein resides in the cytoplasm. It carries out the reaction tRNA(Gln) + L-glutamine + ATP = L-glutaminyl-tRNA(Gln) + AMP + diphosphate. This Erwinia tasmaniensis (strain DSM 17950 / CFBP 7177 / CIP 109463 / NCPPB 4357 / Et1/99) protein is Glutamine--tRNA ligase.